The primary structure comprises 109 residues: Small ribosomal subunit protein bS6 (109 aa).

Belongs to the bacterial ribosomal protein bS6 family.

In terms of biological role, binds together with bS18 to 16S ribosomal RNA. The sequence is that of Small ribosomal subunit protein bS6 from Ehrlichia ruminantium (strain Gardel).